The chain runs to 462 residues: Argininosuccinate lyase (462 aa).

The protein belongs to the lyase 1 family. Argininosuccinate lyase subfamily.

It is found in the cytoplasm. The catalysed reaction is 2-(N(omega)-L-arginino)succinate = fumarate + L-arginine. It functions in the pathway amino-acid biosynthesis; L-arginine biosynthesis; L-arginine from L-ornithine and carbamoyl phosphate: step 3/3. This Bacillus thuringiensis (strain Al Hakam) protein is Argininosuccinate lyase.